A 360-amino-acid polypeptide reads, in one-letter code: Thioredoxin domain-containing protein 15 (360 aa).

Residues 1 to 32 (MVPAAGRRPPRVMRLLGWWQVLLWVLGLPVRG) form the signal peptide. Residues 33–321 (VEVAEESGRL…GPLPSTLIKS (289 aa)) lie on the Extracellular side of the membrane. Residues 141–173 (PDREEEYYTEPEVAESDAAPTEDSNNTESLKSP) are disordered. Residues 143–155 (REEEYYTEPEVAE) show a composition bias toward acidic residues. The Thioredoxin domain occupies 153-296 (VAESDAAPTE…LKIFIFNQTG (144 aa)). 4 N-linked (GlcNAc...) asparagine glycosylation sites follow: asparagine 187, asparagine 194, asparagine 206, and asparagine 293. Residues 322–342 (VDWLLVFSLFFLISFIMYATI) traverse the membrane as a helical segment. Over 343 to 360 (RTESIRWLIPGQEQEHVE) the chain is Cytoplasmic.

The protein localises to the cell projection. Its subcellular location is the cilium membrane. Functionally, acts as a positive regulator of ciliary hedgehog signaling. Involved in ciliogenesis. This is Thioredoxin domain-containing protein 15 (TXNDC15) from Homo sapiens (Human).